The following is a 513-amino-acid chain: MPVEAPRPARHLEVERKFDVIESTVSPSFEGIAAVVRVEQSPTQQLDAVYFDTPSHDLARNQITLRRRTGGADAGWHLKLPAGPDKRTEMRAPLSASGDAVPAELLDVVLAIVRDQPVQPVARISTHRESQILYGAGGDALAEFCNDDVTAWSAGAFHAAGAADNGPAEQQWREWELELVTTDGTADTKLLDRLANRLLDAGAAPAGHGSKLARVLGATSPGELPNGPQPPADPVHRAVSEQVEQLLLWDRAVRADAYDAVHQMRVTTRKIRSLLTDSQESFGLKESAWVIDELRELANVLGVARDAEVLGDRYQRELDALAPELVRGRVRERLVDGARRRYQTGLRRSLIALRSQRYFRLLDALDALVSERAHATSGEESAPVTIDAAYRRVRKAAKAAKTAGDQAGDHHRDEALHLIRKRAKRLRYTAAATGADNVSQEAKVIQTLLGDHQDSVVSREHLIQQAIAANTAGEDTFTYGLLYQQEADLAERCREQLEAALRKLDKAVRKARD.

In terms of domain architecture, CYTH spans 11–219 (HLEVERKFDV…SKLARVLGAT (209 aa)). The 279-residue stretch at 228 to 506 (PQPPADPVHR…LEAALRKLDK (279 aa)) folds into the CHAD domain.

This is an uncharacterized protein from Mycobacterium tuberculosis (strain CDC 1551 / Oshkosh).